A 310-amino-acid chain; its full sequence is Protein OS-9 homolog (310 aa).

Positions 1 to 40 (MFSSSMFPHLILPAIGSSKVRTMVLPFAFVGFFIFPICLA) are cleaved as a signal peptide. 3 N-linked (GlcNAc...) asparagine glycosylation sites follow: Asn60, Asn97, and Asn104. An MRH domain is found at 129–255 (NVFLIENRGY…TIHVPGLCSL (127 aa)). 2 residues coordinate a mannooligosaccharide derivative: Trp139 and Gln151. Residue Asn204 is glycosylated (N-linked (GlcNAc...) asparagine). 2 disulfides stabilise this stretch: Cys208/Cys241 and Cys223/Cys253. Asp209, Arg215, Glu237, and Tyr243 together coordinate a mannooligosaccharide derivative. Basic and acidic residues-rich tracts occupy residues 282–292 (VDHKDSQHVVD) and 301–310 (EVKEVETQSS). The segment at 282-310 (VDHKDSQHVVDEVAQTSPPEVKEVETQSS) is disordered.

This sequence belongs to the OS-9 family. In terms of assembly, interacts with missfolded ER lumenal proteins.

Its subcellular location is the endoplasmic reticulum membrane. Its function is as follows. Lectin involved in the quality control of the secretory pathway. As a member of the endoplasmic reticulum-associated degradation lumenal (ERAD-L) surveillance system, targets misfolded endoplasmic reticulum lumenal glycoproteins for degradation. The sequence is that of Protein OS-9 homolog (yos9) from Schizosaccharomyces pombe (strain 972 / ATCC 24843) (Fission yeast).